A 910-amino-acid chain; its full sequence is Importin subunit beta-2 (910 aa).

HEAT repeat units follow at residues 12–39, 44–82, 93–126, 132–169, 177–207, 220–247, 259–286, 302–406, 414–442, 454–481, 499–532, 540–573, 581–619, 627–677, 690–721, 729–764, 772–807, 815–848, and 857–888; these read VLVE…NLLE, IPDL…VSSL, YTKS…RWGI, VLPQ…LDRD, DFMI…QFVL, FLET…VYLL, GSIV…FWLA, DKIV…LSSF, IILP…GAIA, PELY…TLGR, FVPL…EEQA, LEPI…ADYV, RYIE…VALR, AETY…ALGS, LGQI…MYCF, DALL…LQLG, KPLL…VYNP, ELFY…LACN, and PMFV…VELF. One can recognise an Importin N-terminal domain in the interval 34–122; that stretch reads ALNLLEKAKD…SGNVITTIIS (89 aa). Residues 333–381 form a disordered region; the sequence is DREEDIRPQHAKGKSRITLNTQGPITQQGSSNADADELEDEDEDDDEFD. Over residues 349–364 the composition is skewed to polar residues; it reads ITLNTQGPITQQGSSN. The span at 366–381 shows a compositional bias: acidic residues; that stretch reads DADELEDEDEDDDEFD.

This sequence belongs to the importin beta family. Importin beta-2 subfamily. As to quaternary structure, interacts with Ran; interacts specifically with the GTP-bound form of Ran (GTP-Ran), protecting it from GTP hydrolysis and nucleotide exchange. Interacts with nucleoporins.

It localises to the cytoplasm. It is found in the nucleus envelope. In terms of biological role, functions in nuclear protein import as nuclear transport receptor. Serves as receptor for arginine/glycine-rich nuclear localization signals (rg-NLS) and PY-NLS in cargo substrates. Its predominant cargo substrate seems to be mRNA-binding proteins. Mediates docking of the importin/substrate complex to the nuclear pore complex (NPC) through binding to repeat-containing nucleoporins. The complex is subsequently translocated through the pore by an energy requiring, Ran-dependent mechanism. At the nucleoplasmic side of the NPC, GTP-Ran binding leads to release of the cargo. The importin is re-exported from the nucleus to the cytoplasm where GTP hydrolysis releases Ran from importin. The directionality of nuclear import is thought to be conferred by an asymmetric distribution of the GTP- and GDP-bound forms of Ran between the cytoplasm and nucleus. This is Importin subunit beta-2 from Schizosaccharomyces pombe (strain 972 / ATCC 24843) (Fission yeast).